The following is a 254-amino-acid chain: Protein Thf1 (254 aa).

The stretch at 183 to 217 (SDKLQKDLDLYRSNLEKMEQARITMEEAIQADRRK) forms a coiled coil. Residues 213-227 (ADRRKREQREQEKLA) are compositionally biased toward basic and acidic residues. The interval 213–254 (ADRRKREQREQEKLAKAAAAEAPAALEASSDNPEPETSETPS) is disordered. The segment covering 228–240 (KAAAAEAPAALEA) has biased composition (low complexity). The span at 245 to 254 (PEPETSETPS) shows a compositional bias: acidic residues.

Belongs to the THF1 family.

Its function is as follows. May be involved in photosynthetic membrane biogenesis. The protein is Protein Thf1 of Synechococcus elongatus (strain ATCC 33912 / PCC 7942 / FACHB-805) (Anacystis nidulans R2).